The primary structure comprises 165 residues: Basic transcription factor 3 (165 aa).

An NAC-A/B domain is found at 33 to 97; that stretch reads TTDDKRLQST…PQTKKLQDIL (65 aa). The span at 120–134 shows a compositional bias: polar residues; the sequence is QKQASGEGNAASATI. The tract at residues 120 to 144 is disordered; sequence QKQASGEGNAASATIQEEDDDDVPE.

It belongs to the NAC-beta family. Part of the nascent polypeptide-associated complex (NAC). Interacts with EIF(ISO)4E.

The protein is Basic transcription factor 3 of Arabidopsis thaliana (Mouse-ear cress).